The chain runs to 515 residues: MAPNFPPIEEALPLHHDLFYDGKWQTPITDSRRETLNPSTGQVIGKIADASTTDVDKAVEAAHKAFLSWKKTTMAERQGYMRRAAAILREHAAELALVESYNTGNPVAAMVIDAERAANALDYFAGLIPMLRGEVLPGPFPTEDYLHYTVREPMGVVARFVASNHPFMFAGARMASVIAGGNTVIIKPPEQAPLSCLRLAELLENVFPPGVVNILPGGAECGQALTCHPLVRKVSLIGSVATGKIIMRNAGSLMKQTSMELGGKNALIAFPDADIDHLVRSVAAGMNFTWAGQSCGSTSRVFLHDSIHDEVLARVVEVVRKGFRPGLATDPTTTMGSLISKAAQDRVLNYIASAREEGARLVTGGGMFDDLAGTPVEGGFFVQPTIFADVTPDMKIAREEIFGPVMSVLRWSDESELIRIVNSTNYGLTGSIFTKDLATAQRMIRQVEAGFVWVNDVCKHFLNVPYGGIKDSGIGRDECIDELFAYTNIKSVNINLGGATHLGSRLSQAGQISNT.

Position 238-243 (238-243 (GSVATG)) interacts with NAD(+). Glu-260 serves as the catalytic Proton acceptor. The active-site Nucleophile is Cys-295.

The protein belongs to the aldehyde dehydrogenase family.

It carries out the reaction an aldehyde + NAD(+) + H2O = a carboxylate + NADH + 2 H(+). It functions in the pathway secondary metabolite biosynthesis. Functionally, aldehyde dehydrogenase; part of the gene cluster that mediates the biosynthesis of the tropolone class of fungal maleic anhydrides. The pathway begins with the synthesis of 3-methylorcinaldehyde by the non-reducing polyketide synthase (PKS) tropA. 3-methylorcinaldehyde is the substrate for the FAD-dependent monooxygenase tropB to yield a dearomatized hydroxycyclohexadione. The 2-oxoglutarate-dependent dioxygenase tropC then performs the oxidative ring expansion to provide the first tropolone metabolite stipitaldehyde. Trop D converts stipitaldehyde into stipitacetal which is in turn converted to stipitalide by the short-chain dehydrogenase/reductase tropE. The next steps involve tropF, tropG, tropH, tropI and tropJ to form successive tropolone maleic anhydrides including stipitaldehydic, stipitatonic and stipitatic acids. In Talaromyces stipitatus (strain ATCC 10500 / CBS 375.48 / QM 6759 / NRRL 1006) (Penicillium stipitatum), this protein is Aldehyde dehydrogenase tropH.